A 34-amino-acid chain; its full sequence is Stromal 70 kDa heat shock-related protein, chloroplastic (34 aa).

It belongs to the heat shock protein 70 family.

It localises to the plastid. It is found in the chloroplast stroma. In terms of biological role, interacts with newly imported chloroplast proteins to assist in their maturation. This Cucurbita maxima (Pumpkin) protein is Stromal 70 kDa heat shock-related protein, chloroplastic.